The sequence spans 3387 residues: Genome polyprotein (3387 aa).

Residues 1–100 (MNQRKKVVRP…LNILNGRKRS (100 aa)) lie on the Cytoplasmic side of the membrane. The interval 36-71 (LFSGKGPLRMVLAFITFLRVLSIPPTAGILKRWGQL) is hydrophobic; homodimerization of capsid protein C. Positions 100–113 (STITLLCLIPTVMA) are cleaved as a propeptide — ER anchor for the capsid protein C, removed in mature form by serine protease NS3. A helical membrane pass occupies residues 101–117 (TITLLCLIPTVMAFSLS). The Extracellular segment spans residues 118–237 (TRDGEPLMIV…GAWKHAQRVE (120 aa)). N-linked (GlcNAc...) asparagine; by host glycosylation is present at N182. Residues 238 to 258 (SWILRNPGFALLAGFMAYMIG) traverse the membrane as a helical segment. The Cytoplasmic portion of the chain corresponds to 259 to 265 (QTGIQRT). A helical transmembrane segment spans residues 266–279 (VFFVLMMLVAPSYG). The Extracellular segment spans residues 280–725 (MRCVGVGNRD…HQVFGSVYTT (446 aa)). Disulfide bonds link C282–C309, C339–C400, C353–C384, and C371–C395. The N-linked (GlcNAc...) asparagine; by host glycan is linked to N346. The segment at 377-390 (DRGWGNGCGLFGKG) is fusion peptide. N432 is a glycosylation site (N-linked (GlcNAc...) asparagine; by host). 2 disulfides stabilise this stretch: C464–C564 and C581–C612. Residues 726 to 746 (MFGGVSWMIRILIGFLVLWIG) form a helical membrane-spanning segment. The Cytoplasmic portion of the chain corresponds to 747-751 (TNSRN). A helical membrane pass occupies residues 752–772 (TSMAMTCIAVGGITLFLGFTV). The Extracellular portion of the chain corresponds to 773 to 1194 (QADMGCVASW…MLGDTMSGRI (422 aa)). Disulfide bonds link C778-C789, C829-C917, C953-C997, C1054-C1103, C1065-C1087, and C1086-C1090. 2 N-linked (GlcNAc...) asparagine; by host glycosylation sites follow: N904 and N981. A helical transmembrane segment spans residues 1195-1218 (GGQIHLAIMAVFKMSPGYVLGVFL). Over 1219–1224 (RKLTSR) the chain is Lumenal. Residues 1225–1243 (ETALMVIGMAMTTVLSIPH) traverse the membrane as a helical segment. The Cytoplasmic segment spans residues 1244 to 1267 (DLMELIDGISLGLILLKIVTQFDN). The helical transmembrane segment at 1268–1288 (TQVGTLALSLTFIRSTMPLVM) threads the bilayer. Position 1289 (A1289) is a topological domain, lumenal. A helical membrane pass occupies residues 1290 to 1308 (WRTIMAVLFVVTLIPLCRT). The Lumenal portion of the chain corresponds to 1309–1316 (SCLQKQSH). The helical transmembrane segment at 1317–1337 (WVEITALILGAQALPVYLMTL) threads the bilayer. Residues 1338 to 1345 (MKGASRRS) lie on the Cytoplasmic side of the membrane. Residues 1346–1366 (WPLNEGIMAVGLVSLLGSALL) form a helical membrane-spanning segment. Over 1367-1369 (KND) the chain is Lumenal. Residues 1370 to 1390 (VPLAGPMVAGGLLLAAYVMSG) traverse the membrane as a helical segment. Residues 1391-1437 (SSADLSLEKAANVQWDEMADITGSSPIIEVKQDEDGSFSIRDVEETN) are Cytoplasmic-facing. The interval 1397–1436 (LEKAANVQWDEMADITGSSPIIEVKQDEDGSFSIRDVEET) is interacts with and activates NS3 protease. Positions 1438 to 1458 (MITLLVKLALITVSGLYPLAI) form an intramembrane region, helical. Residues 1459–2143 (PVTMTLWYMW…QHALNELPES (685 aa)) lie on the Cytoplasmic side of the membrane. Positions 1475 to 1652 (SGALWDVPSP…ERIGEPDYEV (178 aa)) constitute a Peptidase S7 domain. Residues H1525, D1549, and S1609 each act as charge relay system; for serine protease NS3 activity in the active site. Residues 1654–1810 (EDIFRKKRLT…QSNSPIEDIE (157 aa)) form the Helicase ATP-binding domain. The tract at residues 1658-1661 (RKKR) is important for RNA-binding. Position 1667–1674 (1667–1674 (LHPGAGKT)) interacts with ATP. The short motif at 1758–1761 (DEAH) is the DEAH box element. The Helicase C-terminal domain maps to 1820–1987 (TGFDWITDYQ…IIPTLFGPER (168 aa)). Residue K1862 is modified to N6-acetyllysine; by host. The helical transmembrane segment at 2144-2164 (LETLMLVALLGAMTAGIFLFF) threads the bilayer. Topologically, residues 2165 to 2169 (MQGKG) are lumenal. The helical intramembrane region spans 2170–2190 (IGKLSMGLITIAVASGLLWVA). Residue E2191 is a topological domain, lumenal. Residues 2192-2212 (IQPQWIAASIILEFFLMVLLI) form a helical membrane-spanning segment. The Cytoplasmic segment spans residues 2213–2225 (PEPEKQRTPQDNQ). Residues 2226-2246 (LIYVILTILTIIGLIAANEMG) form a helical membrane-spanning segment. Residues 2247 to 2270 (LIEKTKTDFGFYQVKTETTILDVD) are Lumenal-facing. The helical intramembrane region spans 2271-2291 (LRPASAWTLYAVATTILTPML). Residues 2292 to 2301 (RHTIENTSAN) lie on the Lumenal side of the membrane. N2297 and N2301 each carry an N-linked (GlcNAc...) asparagine; by host glycan. The helical intramembrane region spans 2302-2322 (LSLAAIANQAAVLMGLGKGWP). Residues 2323–2343 (LHRMDLGVPLLAMGCYSQVNP) are Lumenal-facing. A helical membrane pass occupies residues 2344–2364 (TTLTASLVMLLVHYAIIGPGL). At 2365 to 2409 (QAKATREAQKRTAAGIMKNPTVDGITVIDLEPISYDPKFEKQLGQ) the chain is on the cytoplasmic side. A helical membrane pass occupies residues 2410 to 2430 (VMLLVLCAGQLLLMRTTWAFC). Residues 2431–2455 (EVLTLATGPILTLWEGNPGRFWNTT) are Lumenal-facing. The N-linked (GlcNAc...) asparagine; by host glycan is linked to N2453. A helical membrane pass occupies residues 2456-2476 (IAVSTANIFRGSYLAGAGLAF). At 2477–3387 (SLIKNAQTPR…SAPSESEGVL (911 aa)) the chain is on the cytoplasmic side. In terms of domain architecture, mRNA cap 0-1 NS5-type MT spans 2489–2751 (TGTTGETLGE…DVDLGAGTRS (263 aa)). S2543 is an S-adenosyl-L-methionine binding site. Residue S2543 is modified to Phosphoserine. Residue K2548 is the For 2'-O-MTase activity of the active site. An SUMO-interacting motif motif is present at residues 2564 to 2567 (VVDL). S-adenosyl-L-methionine contacts are provided by G2573, W2574, T2591, K2592, D2618, and V2619. Residue D2633 is the For 2'-O-MTase activity of the active site. I2634 contacts S-adenosyl-L-methionine. Residues K2668 and E2704 each act as for 2'-O-MTase activity in the active site. An S-adenosyl-L-methionine-binding site is contributed by Y2706. 4 residues coordinate Zn(2+): E2925, H2929, C2934, and C2937. In terms of domain architecture, RdRp catalytic spans 3016-3166 (LMYADDTAGW…PLDERFGTSL (151 aa)). Positions 3200, 3216, and 3335 each coordinate Zn(2+).

It in the N-terminal section; belongs to the class I-like SAM-binding methyltransferase superfamily. mRNA cap 0-1 NS5-type methyltransferase family. As to quaternary structure, homodimer. Interacts (via N-terminus) with host EXOC1 (via C-terminus); this interaction results in EXOC1 degradation through the proteasome degradation pathway. In terms of assembly, forms heterodimers with envelope protein E in the endoplasmic reticulum and Golgi. Homodimer; in the endoplasmic reticulum and Golgi. Interacts with protein prM. Interacts with non-structural protein 1. As to quaternary structure, homodimer; Homohexamer when secreted. Interacts with envelope protein E. In terms of assembly, interacts (via N-terminus) with serine protease NS3. Forms a heterodimer with serine protease NS3. May form homooligomers. As to quaternary structure, forms a heterodimer with NS2B. Interacts with NS4B. Interacts with unphosphorylated RNA-directed RNA polymerase NS5; this interaction stimulates RNA-directed RNA polymerase NS5 guanylyltransferase activity. Interacts with host SHFL. In terms of assembly, interacts with host MAVS; this interaction inhibits the synthesis of IFN-beta. Interacts with host SHFL. Interacts with host AUP1; the interaction occurs in the presence of Dengue virus NS4B and induces lipophagy which facilitates production of virus progeny particles. Interacts with serine protease NS3. As to quaternary structure, homodimer. Interacts with host STAT2; this interaction inhibits the phosphorylation of the latter, and, when all viral proteins are present (polyprotein), targets STAT2 for degradation. Interacts with serine protease NS3. Interacts with host PAF1 complex; the interaction may prevent the recruitment of the PAF1 complex to interferon-responsive genes, and thus reduces the immune response. In terms of processing, specific enzymatic cleavages in vivo yield mature proteins. Cleavages in the lumen of endoplasmic reticulum are performed by host signal peptidase, whereas cleavages in the cytoplasmic side are performed by serine protease NS3. Signal cleavage at the 2K-4B site requires a prior NS3 protease-mediated cleavage at the 4A-2K site. Post-translationally, cleaved in post-Golgi vesicles by a host furin, releasing the mature small envelope protein M, and peptide pr. This cleavage is incomplete as up to 30% of viral particles still carry uncleaved prM. N-glycosylated. In terms of processing, N-glycosylated. The excreted form is glycosylated and this is required for efficient secretion of the protein from infected cells. Post-translationally, acetylated by host KAT5. Acetylation modulates NS3 RNA-binding and unwinding activities and plays an important positive role for viral replication. Sumoylation of RNA-directed RNA polymerase NS5 increases NS5 protein stability allowing proper viral RNA replication. In terms of processing, phosphorylated on serines residues. This phosphorylation may trigger NS5 nuclear localization.

It localises to the virion. The protein resides in the host nucleus. It is found in the host cytoplasm. The protein localises to the host perinuclear region. Its subcellular location is the secreted. It localises to the virion membrane. The protein resides in the host endoplasmic reticulum membrane. It is found in the host mitochondrion. The catalysed reaction is Selective hydrolysis of -Xaa-Xaa-|-Yaa- bonds in which each of the Xaa can be either Arg or Lys and Yaa can be either Ser or Ala.. It carries out the reaction RNA(n) + a ribonucleoside 5'-triphosphate = RNA(n+1) + diphosphate. It catalyses the reaction a ribonucleoside 5'-triphosphate + H2O = a ribonucleoside 5'-diphosphate + phosphate + H(+). The enzyme catalyses ATP + H2O = ADP + phosphate + H(+). The catalysed reaction is a 5'-end (5'-triphosphoguanosine)-ribonucleoside in mRNA + S-adenosyl-L-methionine = a 5'-end (N(7)-methyl 5'-triphosphoguanosine)-ribonucleoside in mRNA + S-adenosyl-L-homocysteine. It carries out the reaction a 5'-end (N(7)-methyl 5'-triphosphoguanosine)-ribonucleoside in mRNA + S-adenosyl-L-methionine = a 5'-end (N(7)-methyl 5'-triphosphoguanosine)-(2'-O-methyl-ribonucleoside) in mRNA + S-adenosyl-L-homocysteine + H(+). Its function is as follows. Plays a role in virus budding by binding to the cell membrane and gathering the viral RNA into a nucleocapsid that forms the core of a mature virus particle. During virus entry, may induce genome penetration into the host cytoplasm after hemifusion induced by the surface proteins. Can migrate to the cell nucleus where it modulates host functions. Overcomes the anti-viral effects of host EXOC1 by sequestering and degrading the latter through the proteasome degradation pathway. Functionally, regulates the ATPase activity of the NS3 helicase activity. NS4A allows NS3 helicase to conserve energy during unwinding. Plays a role in the inhibition of the host innate immune response. Interacts with host MAVS and thereby prevents the interaction between RIGI and MAVS. In turn, IFN-beta production is impaired. Interacts with host AUP1 which mediates induction of lipophagy in host cells and facilitates production of virus progeny particles. In terms of biological role, inhibits RNA silencing by interfering with host Dicer. Prevents premature fusion activity of envelope proteins in trans-Golgi by binding to envelope protein E at pH6.0. After virion release in extracellular space, gets dissociated from E dimers. Its function is as follows. Acts as a chaperone for envelope protein E during intracellular virion assembly by masking and inactivating envelope protein E fusion peptide. prM is the only viral peptide matured by host furin in the trans-Golgi network probably to avoid catastrophic activation of the viral fusion activity in acidic Golgi compartment prior to virion release. prM-E cleavage is inefficient, and many virions are only partially matured. These uncleaved prM would play a role in immune evasion. Functionally, may play a role in virus budding. Exerts cytotoxic effects by activating a mitochondrial apoptotic pathway through M ectodomain. May display a viroporin activity. In terms of biological role, binds to host cell surface receptor and mediates fusion between viral and cellular membranes. Envelope protein is synthesized in the endoplasmic reticulum in the form of heterodimer with protein prM. They play a role in virion budding in the ER, and the newly formed immature particle is covered with 60 spikes composed of heterodimer between precursor prM and envelope protein E. The virion is transported to the Golgi apparatus where the low pH causes dissociation of PrM-E heterodimers and formation of E homodimers. prM-E cleavage is inefficient, and many virions are only partially matured. These uncleaved prM would play a role in immune evasion. Involved in immune evasion, pathogenesis and viral replication. Once cleaved off the polyprotein, is targeted to three destinations: the viral replication cycle, the plasma membrane and the extracellular compartment. Essential for viral replication. Required for formation of the replication complex and recruitment of other non-structural proteins to the ER-derived membrane structures. Excreted as a hexameric lipoparticle that plays a role against host immune response. Antagonizing the complement function. Binds to the host macrophages and dendritic cells. Inhibits signal transduction originating from Toll-like receptor 3 (TLR3). Its function is as follows. Disrupts the host endothelial glycocalyx layer of host pulmonary microvascular endothelial cells, inducing degradation of sialic acid and shedding of heparan sulfate proteoglycans. NS1 induces expression of sialidases, heparanase, and activates cathepsin L, which activates heparanase via enzymatic cleavage. These effects are probably linked to the endothelial hyperpermeability observed in severe dengue disease. Functionally, component of the viral RNA replication complex that functions in virion assembly and antagonizes the host immune response. In terms of biological role, required cofactor for the serine protease function of NS3. May have membrane-destabilizing activity and form viroporins. Displays three enzymatic activities: serine protease, NTPase and RNA helicase. NS3 serine protease, in association with NS2B, performs its autocleavage and cleaves the polyprotein at dibasic sites in the cytoplasm: C-prM, NS2A-NS2B, NS2B-NS3, NS3-NS4A, NS4A-2K and NS4B-NS5. NS3 RNA helicase binds RNA and unwinds dsRNA in the 3' to 5' direction. Its function is as follows. Functions as a signal peptide for NS4B and is required for the interferon antagonism activity of the latter. Functionally, induces the formation of ER-derived membrane vesicles where the viral replication takes place. Inhibits interferon (IFN)-induced host STAT1 phosphorylation and nuclear translocation, thereby preventing the establishment of cellular antiviral state by blocking the IFN-alpha/beta pathway. In terms of biological role, replicates the viral (+) and (-) RNA genome, and performs the capping of genomes in the cytoplasm. NS5 methylates viral RNA cap at guanine N-7 and ribose 2'-O positions. Besides its role in RNA genome replication, also prevents the establishment of cellular antiviral state by blocking the interferon-alpha/beta (IFN-alpha/beta) signaling pathway. Inhibits host TYK2 and STAT2 phosphorylation, thereby preventing activation of JAK-STAT signaling pathway. May reduce immune responses by preventing the recruitment of the host PAF1 complex to interferon-responsive genes. The protein is Genome polyprotein of Dengue virus type 4 (strain Dominica/814669/1981) (DENV-4).